The primary structure comprises 238 residues: Ribosomal RNA small subunit methyltransferase G (238 aa).

S-adenosyl-L-methionine-binding positions include Gly80, 131–132 (AE), and Arg148.

This sequence belongs to the methyltransferase superfamily. RNA methyltransferase RsmG family.

The protein resides in the cytoplasm. Functionally, specifically methylates the N7 position of a guanine in 16S rRNA. The polypeptide is Ribosomal RNA small subunit methyltransferase G (Thermotoga maritima (strain ATCC 43589 / DSM 3109 / JCM 10099 / NBRC 100826 / MSB8)).